Reading from the N-terminus, the 62-residue chain is Potassium channel toxin kappa-KTx 3.3 (62 aa).

The signal sequence occupies residues 1–26 (MKSTLMTASLLILVLLSIVDYASVYA). Residues 27–36 (ELIDSEISME) constitute a propeptide that is removed on maturation. Disulfide bonds link Cys43–Cys61 and Cys47–Cys57.

It belongs to the short scorpion toxin superfamily. Potassium channel inhibitor kappa-KTx family. Kappa-KTx 3 subfamily. Expressed by the venom gland.

It is found in the secreted. Its function is as follows. Potassium channel inhibitor (Kv). The polypeptide is Potassium channel toxin kappa-KTx 3.3 (Heterometrus petersii (Asian forest scorpion)).